The chain runs to 29 residues: Varv peptide E (29 aa).

The segment at residues 1 to 29 (GLPICGETCVGGTCNTPGCSCSWPVCTRN) is a cross-link (cyclopeptide (Gly-Asn)). 3 disulfide bridges follow: cysteine 5–cysteine 19, cysteine 9–cysteine 21, and cysteine 14–cysteine 26.

In terms of processing, this is a cyclic peptide.

Functionally, probably participates in a plant defense mechanism. Has cytotoxic activity against human lymphoma U-937 GTB and human myeloma RPMI-8226/s cell lines. The protein is Varv peptide E of Viola arvensis (European field pansy).